We begin with the raw amino-acid sequence, 295 residues long: Ankyrin repeat and SOCS box protein 17 (295 aa).

The ANK repeat unit spans residues 146-176 (SGITPLFYVAQTRQSNIFKILLQYGILEREK). The 64-residue stretch at 232–295 (LGRHPIISNW…RLQNYLNLEI (64 aa)) folds into the SOCS box domain.

It belongs to the ankyrin SOCS box (ASB) family. In terms of tissue distribution, specifically expressed in testis. Not detected in other tissues tested.

It participates in protein modification; protein ubiquitination. Functionally, may be a substrate-recognition component of a SCF-like ECS (Elongin-Cullin-SOCS-box protein) E3 ubiquitin-protein ligase complex which mediates the ubiquitination and subsequent proteasomal degradation of target proteins. The sequence is that of Ankyrin repeat and SOCS box protein 17 (ASB17) from Homo sapiens (Human).